We begin with the raw amino-acid sequence, 633 residues long: DNA mismatch repair protein MutL (633 aa).

Disordered stretches follow at residues 337–364 (RPDDQLAPPGATSLTEPRPTGAAAGEFG) and 383–405 (VGWSGGSSASGGSSGYSAYTRPE). The segment covering 385–396 (WSGGSSASGGSS) has biased composition (gly residues).

This sequence belongs to the DNA mismatch repair MutL/HexB family.

Its function is as follows. This protein is involved in the repair of mismatches in DNA. It is required for dam-dependent methyl-directed DNA mismatch repair. May act as a 'molecular matchmaker', a protein that promotes the formation of a stable complex between two or more DNA-binding proteins in an ATP-dependent manner without itself being part of a final effector complex. The sequence is that of DNA mismatch repair protein MutL from Pseudomonas aeruginosa (strain UCBPP-PA14).